We begin with the raw amino-acid sequence, 249 residues long: Ubiquinone biosynthesis O-methyltransferase (249 aa).

Positions 1 to 23 (MTSPSQVLPASAGKPTGPNADPK) are disordered. Residues Arg52, Gly71, Asp92, and Met136 each contribute to the S-adenosyl-L-methionine site.

The protein belongs to the methyltransferase superfamily. UbiG/COQ3 family.

The catalysed reaction is a 3-demethylubiquinol + S-adenosyl-L-methionine = a ubiquinol + S-adenosyl-L-homocysteine + H(+). The enzyme catalyses a 3-(all-trans-polyprenyl)benzene-1,2-diol + S-adenosyl-L-methionine = a 2-methoxy-6-(all-trans-polyprenyl)phenol + S-adenosyl-L-homocysteine + H(+). It functions in the pathway cofactor biosynthesis; ubiquinone biosynthesis. O-methyltransferase that catalyzes the 2 O-methylation steps in the ubiquinone biosynthetic pathway. The chain is Ubiquinone biosynthesis O-methyltransferase from Cupriavidus pinatubonensis (strain JMP 134 / LMG 1197) (Cupriavidus necator (strain JMP 134)).